We begin with the raw amino-acid sequence, 156 residues long: Large ribosomal subunit protein uL15 (156 aa).

Positions 1–44 (MKLNELRDNPGASPKRTRVGRGPGSGKGKMGGRGIKGQKSRSGV) are disordered. The span at 21–35 (RGPGSGKGKMGGRGI) shows a compositional bias: gly residues.

This sequence belongs to the universal ribosomal protein uL15 family. As to quaternary structure, part of the 50S ribosomal subunit.

In terms of biological role, binds to the 23S rRNA. This is Large ribosomal subunit protein uL15 from Ruegeria sp. (strain TM1040) (Silicibacter sp.).